The sequence spans 259 residues: MWLQILSLVLSVGRIDAAPPGQSRIVGGYKCEKNSQPWQVAVINEYLCGGVLIDPSWVITAAHCYSNNYQVLLGRNNLFKDEPFAQRRLVRQSFRHPDYIPLIVTNDTEQPVHDHSNDLMLLHLSEPADITGGVKVIDLPTKEPKVGSTCLASGWGSTNPSEMVVSHDLQCVNIHLLSNEKCIETYKDNVTDVMLCAGEMEGGKDTCAGDSGGPLICDGVLQGITSGGATPCAKPKTPAIYAKLIKFTSWIKKVMKENP.

Residues 1–18 form the signal peptide; that stretch reads MWLQILSLVLSVGRIDAA. Positions 19–24 are cleaved as a propeptide — activation peptide; it reads PPGQSR. A Peptidase S1 domain is found at 25–256; it reads IVGGYKCEKN…FTSWIKKVMK (232 aa). Disulfide bonds link cysteine 31–cysteine 171, cysteine 48–cysteine 64, cysteine 150–cysteine 217, cysteine 182–cysteine 196, and cysteine 207–cysteine 232. The active-site Charge relay system is histidine 63. Histidine 63 provides a ligand contact to Zn(2+). The N-linked (GlcNAc...) asparagine glycan is linked to asparagine 106. Zn(2+)-binding residues include histidine 113 and histidine 115. Aspartate 118 serves as the catalytic Charge relay system. A glycan (N-linked (GlcNAc...) asparagine) is linked at asparagine 189. Serine 211 serves as the catalytic Charge relay system.

It belongs to the peptidase S1 family. Kallikrein subfamily. In terms of assembly, monomer. It depends on Zn(2+) as a cofactor. Found in submaxillary gland.

It catalyses the reaction Preferential cleavage of Arg-|-Xaa bonds in small molecule substrates. Highly selective action to release kallidin (lysyl-bradykinin) from kininogen involves hydrolysis of Met-|-Xaa or Leu-|-Xaa.. In terms of biological role, this protein has both trypsin- and chymotrypsin-like activities, being able to release angiotensin II from angiotensin I or angiotensinogen. The protein is Tonin (Klk2) of Rattus norvegicus (Rat).